The chain runs to 1204 residues: Major DNA-binding protein (1204 aa).

A disordered region spans residues 289–314 (SGTTTARGARRNDVNSTSKPSPSGGF). A zinc finger lies at 497-510 (CSLCEKHTRPVCAH). 2 short sequence motifs (required for filament formation) span residues 841-842 (FW) and 1146-1148 (FNF). Residues 1177-1204 (LKRPPEDDELFDLSGIPIKHGNITMEMI) are required for nuclear localization.

Belongs to the herpesviridae major DNA-binding protein family. In terms of assembly, homooligomers. Forms double-helical filaments necessary for the formation of replication compartments within the host nucleus. Interacts with the origin-binding protein. Interacts with the helicase primase complex; this interaction stimulates primer synthesis activity of the helicase-primase complex. Interacts with the DNA polymerase. Interacts with the alkaline exonuclease; this interaction increases its nuclease processivity.

Its subcellular location is the host nucleus. Functionally, plays several crucial roles in viral infection. Participates in the opening of the viral DNA origin to initiate replication by interacting with the origin-binding protein. May disrupt loops, hairpins and other secondary structures present on ssDNA to reduce and eliminate pausing of viral DNA polymerase at specific sites during elongation. Promotes viral DNA recombination by performing strand-transfer, characterized by the ability to transfer a DNA strand from a linear duplex to a complementary single-stranded DNA circle. Can also catalyze the renaturation of complementary single strands. Additionally, reorganizes the host cell nucleus, leading to the formation of prereplicative sites and replication compartments. This process is driven by the protein which can form double-helical filaments in the absence of DNA. This Homo sapiens (Human) protein is Major DNA-binding protein.